We begin with the raw amino-acid sequence, 91 residues long: Large ribosomal subunit protein bL31B-1 (91 aa).

Belongs to the bacterial ribosomal protein bL31 family. Type B subfamily. Part of the 50S ribosomal subunit.

This chain is Large ribosomal subunit protein bL31B-1, found in Streptomyces avermitilis (strain ATCC 31267 / DSM 46492 / JCM 5070 / NBRC 14893 / NCIMB 12804 / NRRL 8165 / MA-4680).